The sequence spans 742 residues: Ectonucleotide pyrophosphatase/phosphodiesterase 1 (742 aa).

The Cytoplasmic segment spans residues 1-113; that stretch reads MELQNDLESL…TGFHSKVPFK (113 aa). The helical transmembrane segment at 114-134 threads the bilayer; it reads IIFRTLFGSLVFAIFLILMIN. Over 135-742 the chain is Extracellular; sequence IAKPHHSTRV…SIDDLVDSDT (608 aa). N-linked (GlcNAc...) asparagine glycans are attached at residues Asn-161 and Asn-204. Residues 168–545 form a phosphodiesterase region; it reads PLTIVISLDG…VFTIGSHGYD (378 aa). Thr-219 serves as the catalytic Nucleophile. N-linked (GlcNAc...) asparagine glycans are attached at residues Asn-264, Asn-296, and Asn-403. The segment covering 640-659 has biased composition (acidic residues); it reads EETEQDNVDNDNDDNDDGNT. Disordered regions lie at residues 640-670 and 686-711; these read EETE…SSSL and TLLG…TAST. A compositionally biased stretch (low complexity) spans 691–711; the sequence is TSPSSRSSSSSSIQASATAST.

Belongs to the nucleotide pyrophosphatase/phosphodiesterase family. In terms of processing, autophosphorylated as part of the catalytic cycle of phosphodiesterase/pyrophosphatase activity. N-glycosylated.

It localises to the membrane. It carries out the reaction Hydrolytically removes 5'-nucleotides successively from the 3'-hydroxy termini of 3'-hydroxy-terminated oligonucleotides.. The enzyme catalyses a ribonucleoside 5'-triphosphate + H2O = a ribonucleoside 5'-phosphate + diphosphate + H(+). It catalyses the reaction a 2'-deoxyribonucleoside 5'-triphosphate + H2O = a 2'-deoxyribonucleoside 5'-phosphate + diphosphate + H(+). Mediates extracellular nucleotide derived phosphate hydrolysis along with NPP2 and PHO5. This is Ectonucleotide pyrophosphatase/phosphodiesterase 1 (NPP1) from Saccharomyces cerevisiae (strain ATCC 204508 / S288c) (Baker's yeast).